We begin with the raw amino-acid sequence, 336 residues long: D-erythrose-4-phosphate dehydrogenase (336 aa).

Residues 11 to 12 and Arg80 each bind NAD(+); that span reads RI. Residues 153–155, Arg199, 212–213, and Arg235 each bind substrate; these read SCT and TK. The Nucleophile role is filled by Cys154. Asn317 serves as a coordination point for NAD(+).

It belongs to the glyceraldehyde-3-phosphate dehydrogenase family. Epd subfamily. Homotetramer.

It is found in the cytoplasm. The enzyme catalyses D-erythrose 4-phosphate + NAD(+) + H2O = 4-phospho-D-erythronate + NADH + 2 H(+). The protein operates within cofactor biosynthesis; pyridoxine 5'-phosphate biosynthesis; pyridoxine 5'-phosphate from D-erythrose 4-phosphate: step 1/5. Functionally, catalyzes the NAD-dependent conversion of D-erythrose 4-phosphate to 4-phosphoerythronate. This Aeromonas hydrophila subsp. hydrophila (strain ATCC 7966 / DSM 30187 / BCRC 13018 / CCUG 14551 / JCM 1027 / KCTC 2358 / NCIMB 9240 / NCTC 8049) protein is D-erythrose-4-phosphate dehydrogenase.